The primary structure comprises 156 residues: Small ribosomal subunit protein uS7 (156 aa).

The protein belongs to the universal ribosomal protein uS7 family. As to quaternary structure, part of the 30S ribosomal subunit. Contacts proteins S9 and S11.

Functionally, one of the primary rRNA binding proteins, it binds directly to 16S rRNA where it nucleates assembly of the head domain of the 30S subunit. Is located at the subunit interface close to the decoding center, probably blocks exit of the E-site tRNA. The sequence is that of Small ribosomal subunit protein uS7 from Vibrio campbellii (strain ATCC BAA-1116).